We begin with the raw amino-acid sequence, 326 residues long: Adenosine receptor A1 (326 aa).

The Extracellular segment spans residues 1–10 (MPPYISAFQA). A helical membrane pass occupies residues 11-33 (AYIGIEVLIALVSVPGNVLVIWA). Residues 34–46 (VKVNQALRDATFC) lie on the Cytoplasmic side of the membrane. The chain crosses the membrane as a helical span at residues 47–69 (FIVSLAVADVAVGALVIPLAILI). Residues 70–80 (NIGPQTYFHTC) lie on the Extracellular side of the membrane. C80 and C169 are disulfide-bonded. Residues 81–102 (LMVACPVLILTQSSILALLAIA) form a helical membrane-spanning segment. Topologically, residues 103-123 (VDRYLRVKIPLRYKTVVTQRR) are cytoplasmic. Residues 124-146 (AAVAIAGCWILSLVVGLTPMFGW) form a helical membrane-spanning segment. Over 147-176 (NNLSEVEQAWIANGSVGEPVIKCEFEKVIS) the chain is Extracellular. N-linked (GlcNAc...) asparagine glycans are attached at residues N148 and N159. A helical transmembrane segment spans residues 177 to 201 (MEYMVYFNFFVWVLPPLLLMVLIYL). Over 202–235 (EVFYLIRKQLNKKVSASSGDPQKYYGKELKIAKS) the chain is Cytoplasmic. A helical membrane pass occupies residues 236–259 (LALILFLFALSWLPLHILNCITLF). The Extracellular segment spans residues 260–267 (CPTCQKPS). A helical transmembrane segment spans residues 268 to 292 (ILIYIAIFLTHGNSAMNPIVYAFRI). Residues 293–326 (HKFRVTFLKIWNDHFRCQPKPPIEEDIPEEKADD) lie on the Cytoplasmic side of the membrane. Residue C309 is the site of S-palmitoyl cysteine attachment.

The protein belongs to the G-protein coupled receptor 1 family.

Its subcellular location is the cell membrane. Its function is as follows. Receptor for adenosine. The activity of this receptor is mediated by G proteins which inhibit adenylyl cyclase. This Mus musculus (Mouse) protein is Adenosine receptor A1 (Adora1).